The chain runs to 448 residues: Metacaspase-1 (448 aa).

The tract at residues M1–S129 is disordered. The segment covering Y10–Y44 has biased composition (low complexity). Over residues S61 to G70 the composition is skewed to pro residues. The span at Y99–G114 shows a compositional bias: polar residues. Catalysis depends on residues H231 and C292.

Belongs to the peptidase C14B family.

Functionally, involved in cell death (apoptosis). This chain is Metacaspase-1 (MCA1), found in Candida albicans (strain SC5314 / ATCC MYA-2876) (Yeast).